The sequence spans 282 residues: Bis(5'-nucleosyl)-tetraphosphatase, symmetrical (282 aa).

This sequence belongs to the Ap4A hydrolase family.

It catalyses the reaction P(1),P(4)-bis(5'-adenosyl) tetraphosphate + H2O = 2 ADP + 2 H(+). Hydrolyzes diadenosine 5',5'''-P1,P4-tetraphosphate to yield ADP. The polypeptide is Bis(5'-nucleosyl)-tetraphosphatase, symmetrical (Salmonella paratyphi C (strain RKS4594)).